Consider the following 298-residue polypeptide: Protease HtpX (298 aa).

2 consecutive transmembrane segments (helical) span residues 4-24 (IGLFLLTNIAVLAVAMITMNL) and 38-58 (LGNLFAFAAIIGFAGSFVSLA). Zn(2+) is bound at residue H145. Residue E146 is part of the active site. Zn(2+) is bound at residue H149. Helical transmembrane passes span 160–180 (LLQGVVNTFVIFFAKIVAYVV) and 194–214 (ITFIVVDIVAQILFGILASMI). E223 provides a ligand contact to Zn(2+).

It belongs to the peptidase M48B family. Zn(2+) is required as a cofactor.

The protein resides in the cell inner membrane. This Hydrogenovibrio crunogenus (strain DSM 25203 / XCL-2) (Thiomicrospira crunogena) protein is Protease HtpX.